Here is a 358-residue protein sequence, read N- to C-terminus: Phenylalanine--tRNA ligase alpha subunit (358 aa).

Residue Glu-262 participates in Mg(2+) binding.

It belongs to the class-II aminoacyl-tRNA synthetase family. Phe-tRNA synthetase alpha subunit type 1 subfamily. As to quaternary structure, tetramer of two alpha and two beta subunits. It depends on Mg(2+) as a cofactor.

It is found in the cytoplasm. The enzyme catalyses tRNA(Phe) + L-phenylalanine + ATP = L-phenylalanyl-tRNA(Phe) + AMP + diphosphate + H(+). This chain is Phenylalanine--tRNA ligase alpha subunit (pheS), found in Streptomyces coelicolor (strain ATCC BAA-471 / A3(2) / M145).